The chain runs to 82 residues: RNA-binding protein Hfq (82 aa).

The 62-residue stretch at 11–72 folds into the Sm domain; the sequence is DTFLNAVRKS…ISTIAPSAPV (62 aa).

This sequence belongs to the Hfq family. In terms of assembly, homohexamer.

RNA chaperone that binds small regulatory RNA (sRNAs) and mRNAs to facilitate mRNA translational regulation in response to envelope stress, environmental stress and changes in metabolite concentrations. Also binds with high specificity to tRNAs. This is RNA-binding protein Hfq from Hyphomonas neptunium (strain ATCC 15444).